The chain runs to 111 residues: Cyclin-dependent protein kinase inhibitor SMR2 (111 aa).

Residues methionine 1–isoleucine 66 are disordered. Residues glutamate 10–leucine 35 are compositionally biased toward basic and acidic residues.

In terms of assembly, interacts with CYCD2-1. Interacts with CDKB1-1. As to expression, expressed at low levels in roots and stems. Expressed in the root vascular tissue.

Its subcellular location is the nucleus. Its function is as follows. Cyclin-dependent protein kinase (CDK) inhibitor that restricts cell proliferation and cooperates with SIM and SMR1 to promote endoreplication during leaf development. This chain is Cyclin-dependent protein kinase inhibitor SMR2, found in Arabidopsis thaliana (Mouse-ear cress).